The following is a 52-amino-acid chain: MFDINLTHEQQQKAVEQIQELMAKGISSGEAIQIVAKALREIHKNDKKTPEN.

This sequence belongs to the UPF0181 family.

This Haemophilus influenzae (strain PittGG) protein is UPF0181 protein CGSHiGG_01050.